Here is a 226-residue protein sequence, read N- to C-terminus: Elongation factor 1-delta (226 aa).

Residues 82 to 131 (SSVATPPVADTKASAAEDDDDDDVDLFGEETEEEKKASEERAAAVKASGK) are disordered. Residues 97 to 113 (AEDDDDDDVDLFGEETE) show a composition bias toward acidic residues. Positions 114–124 (EEKKASEERAA) are enriched in basic and acidic residues.

Belongs to the EF-1-beta/EF-1-delta family. In terms of assembly, EF-1 is composed of 4 subunits: alpha, beta (1B-alpha=beta'), delta (1B-beta), and gamma (1B-gamma).

Its function is as follows. EF-1-beta and EF-1-beta' stimulate the exchange of GDP bound to EF-1-alpha to GTP. This Spuriopimpinella brachycarpa (Chamnamul) protein is Elongation factor 1-delta.